The primary structure comprises 474 residues: Transcription termination factor Rho (474 aa).

Residues 1–60 (MTEELDNTPSPAGDIPQETLPKPLPAPEETAGEQPAAAPEENRGNAVREEEEAAPVLEQI) form a disordered region. One can recognise a Rho RNA-BD domain in the interval 107–182 (EVVVSGVMEQ…ASVISVEDIP (76 aa)). ATP-binding positions include 226-231 (GKGQRG), 238-243 (RGGKTV), and Arg269.

It belongs to the Rho family. In terms of assembly, homohexamer. The homohexamer assembles into an open ring structure.

Its function is as follows. Facilitates transcription termination by a mechanism that involves Rho binding to the nascent RNA, activation of Rho's RNA-dependent ATPase activity, and release of the mRNA from the DNA template. The polypeptide is Transcription termination factor Rho (Akkermansia muciniphila (strain ATCC BAA-835 / DSM 22959 / JCM 33894 / BCRC 81048 / CCUG 64013 / CIP 107961 / Muc)).